Reading from the N-terminus, the 1016-residue chain is EMILIN-1 (1016 aa).

An N-terminal signal peptide occupies residues Met1–Ala21. Residues His56–Glu131 form the EMI domain. Intrachain disulfides connect Cys60/Cys121, Cys85/Cys92, and Cys120/Cys129. A disordered region spans residues Pro135–Glu182. The span at Pro139–Ser165 shows a compositional bias: low complexity. A glycan (N-linked (GlcNAc...) asparagine) is linked at Asn154. A coiled-coil region spans residues Thr216–Gln256. Disordered stretches follow at residues Glu257–Glu288 and Arg383–Ser402. Residues Gly266–Pro279 show a composition bias toward low complexity. A coiled-coil region spans residues Pro356–Pro420. A compositionally biased stretch (gly residues) spans Glu386–Pro397. Asn415 is a glycosylation site (N-linked (GlcNAc...) asparagine). Residues Ser416–Leu435 are disordered. N-linked (GlcNAc...) asparagine glycans are attached at residues Asn455 and Asn561. Positions Ala576–Ser603 form a coiled coil. Asn658 carries an N-linked (GlcNAc...) asparagine glycan. A coiled-coil region spans residues Ile685–Ser752. N-linked (GlcNAc...) asparagine glycans are attached at residues Asn766 and Asn794. Disordered stretches follow at residues Asp811–Ala863 and Arg942–Ser961. A Collagen-like domain is found at Gly814 to Pro864. Over residues Pro821 to Ser839 the composition is skewed to pro residues. Positions Gly835–Glu857 form a coiled coil. One can recognise a C1q domain in the interval Ala866–Leu1013.

As to quaternary structure, homotrimer associated through a moderately stable interaction of the C-terminal globular C1q domains, allowing the nucleation of the triple helix and then a further quaternary assembly to higher-order polymers via intermolecular disulfide bonds. Interacts with EMILIN2. Interacts with EFEMP2; this interaction promotes the incorporation of EFEMP2 into the extracellular matrix. In terms of tissue distribution, distributed in tissues where resilience and elastic recoil are prominent. Highest levels in the adult small intestine, aorta, lung, uterus, and appendix and in the fetal spleen, kidney, lung, and heart; intermediate expression was detected in adult liver, ovary, colon, stomach, lymph node and spleen; adult heart, bladder, prostate, adrenal gland, mammary gland, placenta and kidney showed low expression whereas a series of other adult tissues, including skeletal muscle and different regions of adult brain show no expression. Detected in intramuscular nerve bundles, where it particularly localizes in the epineurium, the most external layer of dense connective tissue enclosing the nerve.

The protein localises to the secreted. It localises to the extracellular space. The protein resides in the extracellular matrix. Its function is as follows. Involved in elastic and collagen fibers formation. It is required for EFEMP2 deposition into the extracellular matrix, and collagen network assembly and cross-linking via protein-lysine 6-oxidase/LOX activity. May be responsible for anchoring smooth muscle cells to elastic fibers, and may be involved in the processes that regulate vessel assembly. Has cell adhesive capacity. The chain is EMILIN-1 (EMILIN1) from Homo sapiens (Human).